We begin with the raw amino-acid sequence, 510 residues long: Maturase K (510 aa).

The protein belongs to the intron maturase 2 family. MatK subfamily.

The protein localises to the plastid. It is found in the chloroplast. Functionally, usually encoded in the trnK tRNA gene intron. Probably assists in splicing its own and other chloroplast group II introns. The polypeptide is Maturase K (Populus trichocarpa (Western balsam poplar)).